The sequence spans 359 residues: S-adenosylmethionine-dependent nucleotide dehydratase RSAD2 (359 aa).

Residues 43–67 (QTPARKISRPESRTSKQKEGSRAPF) are disordered. The span at 50 to 63 (SRPESRTSKQKEGS) shows a compositional bias: basic and acidic residues. One can recognise a Radical SAM core domain in the interval 67 to 287 (FTTPSSVNYH…LERHQSIQCL (221 aa)). [4Fe-4S] cluster is bound by residues Cys-81, Cys-85, and Cys-88.

Belongs to the radical SAM superfamily. RSAD2 family. The cofactor is [4Fe-4S] cluster.

The protein localises to the endoplasmic reticulum membrane. In terms of biological role, interferon-inducible iron-sulfur (4FE-4S) cluster-binding antiviral protein which plays a major role in the cell antiviral state induced by type I and type II interferon. The protein is S-adenosylmethionine-dependent nucleotide dehydratase RSAD2 of Danio rerio (Zebrafish).